The primary structure comprises 511 residues: Histidine ammonia-lyase (511 aa).

Positions 143–145 form a cross-link, 5-imidazolinone (Ala-Gly); the sequence is ASG. Ser-144 is modified (2,3-didehydroalanine (Ser)).

The protein belongs to the PAL/histidase family. In terms of processing, contains an active site 4-methylidene-imidazol-5-one (MIO), which is formed autocatalytically by cyclization and dehydration of residues Ala-Ser-Gly.

It localises to the cytoplasm. It carries out the reaction L-histidine = trans-urocanate + NH4(+). Its pathway is amino-acid degradation; L-histidine degradation into L-glutamate; N-formimidoyl-L-glutamate from L-histidine: step 1/3. This chain is Histidine ammonia-lyase, found in Idiomarina loihiensis (strain ATCC BAA-735 / DSM 15497 / L2-TR).